Reading from the N-terminus, the 178-residue chain is uncharacterized protein (178 aa).

This is an uncharacterized protein from Saccharolobus islandicus (Sulfolobus islandicus).